The primary structure comprises 586 residues: Probable lysosomal cobalamin transporter (586 aa).

9 helical membrane passes run 10 to 30 (IWIAYAVAVGLALFAAIVTTF), 47 to 67 (VVSLTSLLATVLLLPVDIALV), 96 to 116 (IVYYSLYSLDALLCLIVIPFA), 147 to 167 (SGFIILVLILFFVGFFVPAAG), 191 to 211 (ALTFAVGLLVCLGTLLYVLYT), 315 to 335 (LVGGILLLLVSVIVWVSMLIT), 378 to 398 (IIMAFLVLFFFSSSISGLATV), 420 to 440 (ILIATVMMALIILGINYSIAM), and 509 to 529 (VFGAVDFWAQVAFLAVFLIVL). N540 carries N-linked (GlcNAc...) asparagine glycosylation.

It belongs to the LIMR family. LMBRD1 subfamily.

It localises to the lysosome membrane. In terms of biological role, probable lysosomal cobalamin transporter. Required to export cobalamin from lysosomes allowing its conversion to cofactors. The chain is Probable lysosomal cobalamin transporter from Pyricularia oryzae (strain 70-15 / ATCC MYA-4617 / FGSC 8958) (Rice blast fungus).